A 212-amino-acid chain; its full sequence is Thymidylate kinase (212 aa).

11-18 (GPDGAGKT) is an ATP binding site.

This sequence belongs to the thymidylate kinase family.

It carries out the reaction dTMP + ATP = dTDP + ADP. In terms of biological role, phosphorylation of dTMP to form dTDP in both de novo and salvage pathways of dTTP synthesis. The sequence is that of Thymidylate kinase from Streptococcus mutans serotype c (strain ATCC 700610 / UA159).